The primary structure comprises 523 residues: 2-isopropylmalate synthase (523 aa).

The region spanning V5–W267 is the Pyruvate carboxyltransferase domain. Mn(2+) contacts are provided by D14, H202, H204, and N238. The segment at R392 to V523 is regulatory domain.

The protein belongs to the alpha-IPM synthase/homocitrate synthase family. LeuA type 1 subfamily. In terms of assembly, homodimer. It depends on Mn(2+) as a cofactor.

The protein localises to the cytoplasm. It catalyses the reaction 3-methyl-2-oxobutanoate + acetyl-CoA + H2O = (2S)-2-isopropylmalate + CoA + H(+). The protein operates within amino-acid biosynthesis; L-leucine biosynthesis; L-leucine from 3-methyl-2-oxobutanoate: step 1/4. In terms of biological role, catalyzes the condensation of the acetyl group of acetyl-CoA with 3-methyl-2-oxobutanoate (2-ketoisovalerate) to form 3-carboxy-3-hydroxy-4-methylpentanoate (2-isopropylmalate). The sequence is that of 2-isopropylmalate synthase from Salmonella agona (strain SL483).